Here is a 315-residue protein sequence, read N- to C-terminus: MEHNIAEISVSSLTDPHFLRENKNLFIPDTDPPLSKIETINALSELSIGSSQEIQNPDHKTYSKLGFGKPLFTRADRHYVDPPLSNQDVGLISFVPCNDAKPNKYGVYGFAKIRGTFANVDESDQRASELIQKHDSVHKIYHVKVGTPFPIVHPKISSQYAASVKEIDVKADAKNEISRFVKTAGEEDKKVMEELKEREKQLREDVSKTPEQKLNELTPLDQYIYARKRLSDNLFVFEEHRKKLHDVKKVILQAELEADSLEKTNPEVINQYKEKYEKAAKEAGIDKSTDAMAVMIKENFYNKPNLQKIFSENLV.

Coiled-coil stretches lie at residues 184-212 (AGEEDKKVMEELKEREKQLREDVSKTPEQ) and 238-275 (EEHRKKLHDVKKVILQAELEADSLEKTNPEVINQYKEK).

This sequence belongs to the IIV-6 287R family.

This is an uncharacterized protein from Acheta domesticus (House cricket).